Here is a 222-residue protein sequence, read N- to C-terminus: Flagellar L-ring protein (222 aa).

A signal peptide spans 1 to 18; it reads MRRPGAAALAAAALALAG. Cys19 carries N-palmitoyl cysteine lipidation. Cys19 carries S-diacylglycerol cysteine lipidation.

Belongs to the FlgH family. The basal body constitutes a major portion of the flagellar organelle and consists of four rings (L,P,S, and M) mounted on a central rod.

It localises to the cell outer membrane. The protein localises to the bacterial flagellum basal body. In terms of biological role, assembles around the rod to form the L-ring and probably protects the motor/basal body from shearing forces during rotation. This Burkholderia mallei (strain ATCC 23344) protein is Flagellar L-ring protein.